Here is a 439-residue protein sequence, read N- to C-terminus: Enolase (439 aa).

Histidine 157 and glutamate 166 together coordinate substrate. Glutamate 209 functions as the Proton donor in the catalytic mechanism. The Mg(2+) site is built by aspartate 244, glutamate 297, and aspartate 324. Residues glutamate 297 and aspartate 324 each contribute to the substrate site. Lysine 349 serves as the catalytic Proton acceptor. Residues 376–379 and lysine 400 each bind substrate; that span reads SHRS.

The protein belongs to the enolase family. Homodimer. The cofactor is Mg(2+).

Its subcellular location is the cytoplasm. It catalyses the reaction (2R)-2-phosphoglycerate = phosphoenolpyruvate + H2O. It participates in carbohydrate degradation; glycolysis; pyruvate from D-glyceraldehyde 3-phosphate: step 4/5. The protein is Enolase (ENOL) of Mastigamoeba balamuthi (Phreatamoeba balamuthi).